Reading from the N-terminus, the 93-residue chain is Small ribosomal subunit protein uS19 (93 aa).

Belongs to the universal ribosomal protein uS19 family.

In terms of biological role, protein S19 forms a complex with S13 that binds strongly to the 16S ribosomal RNA. The chain is Small ribosomal subunit protein uS19 (rpsS) from Helicobacter pylori (strain ATCC 700392 / 26695) (Campylobacter pylori).